We begin with the raw amino-acid sequence, 103 residues long: Large ribosomal subunit protein bL21 (103 aa).

Belongs to the bacterial ribosomal protein bL21 family. As to quaternary structure, part of the 50S ribosomal subunit. Contacts protein L20.

In terms of biological role, this protein binds to 23S rRNA in the presence of protein L20. The polypeptide is Large ribosomal subunit protein bL21 (Chloroflexus aggregans (strain MD-66 / DSM 9485)).